The following is a 203-amino-acid chain: RNA annealing protein YRA2 (203 aa).

Met-1 is subject to N-acetylmethionine. Disordered regions lie at residues 1 to 60 (MDKA…REEP) and 137 to 203 (QPQR…YMKG). Positions 11–20 (NSHTDSSSNH) are enriched in polar residues. The span at 47–60 (SRSKDRLYREREEP) shows a compositional bias: basic and acidic residues. Positions 64–138 (KRIRISKIPL…AKIEVEIYQP (75 aa)) constitute an RRM domain. 2 stretches are compositionally biased toward basic residues: residues 139–153 (QRKHSRMNAHNRRKQ) and 161–180 (GRPGSHYRQKPNRVSKKNKG).

Belongs to the YRA1 family. In terms of assembly, associates with mRNPs. Interacts with YRA1.

It localises to the nucleus. Its function is as follows. Involved in export of poly(A) mRNAs from the nucleus. Recruited to the coding sequences as well as poly-A sites of active genes. The sequence is that of RNA annealing protein YRA2 (YRA2) from Saccharomyces cerevisiae (strain JAY291) (Baker's yeast).